The sequence spans 782 residues: Translation initiation factor IF-2 (782 aa).

The interval 47-196 is disordered; the sequence is DNAIDGTNKK…TPPKPKELPE (150 aa). The segment covering 53 to 65 has biased composition (basic and acidic residues); the sequence is TNKKAEAPKKETT. Over residues 66-81 the composition is skewed to polar residues; sequence SNENGNSKGPNKPNMT. Composition is skewed to low complexity over residues 82–93 and 118–170; these read NSNEKSNKPNNP and NTSK…NNKG. The 170-residue stretch at 283-452 folds into the tr-type G domain; the sequence is ERPPVVTIMG…LLVSEVEELK (170 aa). Positions 292-299 are G1; that stretch reads GHVDHGKT. Residue 292-299 coordinates GTP; it reads GHVDHGKT. A G2 region spans residues 317-321; it reads GITQH. Positions 338–341 are G3; the sequence is DTPG. GTP-binding positions include 338 to 342 and 392 to 395; these read DTPGH and NKID. Positions 392–395 are G4; sequence NKID. The tract at residues 428 to 430 is G5; sequence SAK.

Belongs to the TRAFAC class translation factor GTPase superfamily. Classic translation factor GTPase family. IF-2 subfamily.

It localises to the cytoplasm. Functionally, one of the essential components for the initiation of protein synthesis. Protects formylmethionyl-tRNA from spontaneous hydrolysis and promotes its binding to the 30S ribosomal subunits. Also involved in the hydrolysis of GTP during the formation of the 70S ribosomal complex. The chain is Translation initiation factor IF-2 from Listeria monocytogenes serotype 4b (strain CLIP80459).